The sequence spans 304 residues: Uricase (304 aa).

N-acetylalanine is present on Ala2. Residues Lys10 and Lys23 each carry the N6-acetyllysine; alternate modification. Residues Lys10 and Lys23 each carry the N6-succinyllysine; alternate modification. Lys23 functions as the Charge relay system in the catalytic mechanism. N6-acetyllysine occurs at positions 27 and 36. A phosphoserine mark is found at Ser39 and Ser63. Thr68 functions as the Charge relay system in the catalytic mechanism. Thr68 and Asp69 together coordinate urate. Residues Lys118, Lys122, and Lys164 each carry the N6-acetyllysine modification. Position 170 (Phe170) interacts with urate. N6-acetyllysine occurs at positions 175 and 185. Arg187 contributes to the urate binding site. N6-acetyllysine; alternate occurs at positions 221 and 228. An N6-succinyllysine; alternate mark is found at Lys221 and Lys228. Ser232 carries the post-translational modification Phosphoserine. Residues Val235, Gln236, and Asn262 each coordinate urate. His264 serves as the catalytic Charge relay system. Lys278 carries the N6-acetyllysine modification. Tyr289 bears the Phosphotyrosine mark. The Microbody targeting signal motif lies at 302-304; that stretch reads SKL.

This sequence belongs to the uricase family.

The protein resides in the peroxisome. It catalyses the reaction urate + O2 + H2O = 5-hydroxyisourate + H2O2. It functions in the pathway purine metabolism; urate degradation; (S)-allantoin from urate: step 1/3. Catalyzes the oxidation of uric acid to 5-hydroxyisourate, which is further processed to form (S)-allantoin. This Canis lupus familiaris (Dog) protein is Uricase (UOX).